Here is a 314-residue protein sequence, read N- to C-terminus: uncharacterized protein (314 aa).

Disordered stretches follow at residues 170 to 203 and 258 to 314; these read RSSMNSQSQMSESSFPTPIDPPPRIPHPPLNPDE and VGES…PKKR. The segment covering 171 to 186 has biased composition (low complexity); sequence SSMNSQSQMSESSFPT. A compositionally biased stretch (pro residues) spans 187-200; that stretch reads PIDPPPRIPHPPLN. A compositionally biased stretch (polar residues) spans 261–272; that stretch reads SSRQGENTQNVH. Residues 289 to 303 are compositionally biased toward basic and acidic residues; sequence RFKDDARKSNEDEHM.

This is an uncharacterized protein from Arabidopsis thaliana (Mouse-ear cress).